The sequence spans 289 residues: ATP synthase subunit a (289 aa).

Transmembrane regions (helical) follow at residues 41–61 (KATA…WLGF), 101–121 (YLLV…IPAA), 129–149 (IAVP…AGIK), 166–186 (TAPL…TLIV), 189–209 (FTLA…LLVF), 222–242 (FVFG…ELVI), and 244–264 (ALQA…AMAH).

This sequence belongs to the ATPase A chain family. As to quaternary structure, F-type ATPases have 2 components, CF(1) - the catalytic core - and CF(0) - the membrane proton channel. CF(1) has five subunits: alpha(3), beta(3), gamma(1), delta(1), epsilon(1). CF(0) has three main subunits: a(1), b(2) and c(9-12). The alpha and beta chains form an alternating ring which encloses part of the gamma chain. CF(1) is attached to CF(0) by a central stalk formed by the gamma and epsilon chains, while a peripheral stalk is formed by the delta and b chains.

The protein localises to the cell membrane. Functionally, key component of the proton channel; it plays a direct role in the translocation of protons across the membrane. This Frankia alni (strain DSM 45986 / CECT 9034 / ACN14a) protein is ATP synthase subunit a.